Consider the following 232-residue polypeptide: Somatolactin (232 aa).

An N-terminal signal peptide occupies residues 1 to 16 (MHNWKGVWLCSLFLTF). Cystine bridges form between C31–C41, C91–C206, and C223–C231. N147 is a glycosylation site (N-linked (GlcNAc...) asparagine).

It belongs to the somatotropin/prolactin family. As to expression, pituitary gland.

It localises to the secreted. The sequence is that of Somatolactin from Protopterus annectens (African lungfish).